The sequence spans 493 residues: Tripartite motif-containing protein 5 (493 aa).

At Ala2 the chain carries N-acetylalanine. An RING-type zinc finger spans residues 15–59 (CPICLELLTQPLSLDCGHSFCQACLTANHKKSTLDKGERSCPVCR). Residue Ser86 is modified to Phosphoserine. The B box-type zinc-finger motif lies at 90–132 (QKVDHCARHGEKLLLFCKEDGKVICWLCERSQEHRGHHTFLTE). Residues Cys95, His98, Cys117, and His123 each contribute to the Zn(2+) site. The stretch at 131–223 (TEEVAQKYQV…LTKSETEMVQ (93 aa)) forms a coiled coil. Positions 185-198 (FEQLRDILDWEESN) are required for interaction with GABARAP and for autophagy. Positions 281-493 (LKGMLEVFRE…VPMTLCSPSS (213 aa)) constitute a B30.2/SPRY domain.

This sequence belongs to the TRIM/RBCC family. Can form homodimers and homotrimers. In addition to lower-order dimerization, also exhibits a higher-order multimerization and both low- and high-order multimerizations are essential for its restriction activity. Interacts with BTBD1 and BTBD2. Interacts with PSMC4, PSMC5, PSMD7 and HSPA8/HSC70. Interacts (via B30.2/SPRY domain) with HSPA1A/B. Interacts with PSMC2, MAP3K7/TAK1, TAB2 and TAB3. Interacts with SQSTM1. Interacts with TRIM6 and TRIM34. Interacts with ULK1 (phosphorylated form), GABARAP, GABARAPL1, GABARAPL2, MAP1LC3A, MAP1LC3C and BECN1. Post-translationally, degraded in a proteasome-independent fashion in the absence of viral infection but in a proteasome-dependent fashion following exposure to restriction sensitive virus. Autoubiquitinated in a RING finger- and UBE2D2-dependent manner. Monoubiquitinated by TRIM21. Deubiquitinated by Yersinia YopJ. Ubiquitination may not lead to proteasomal degradation.

It is found in the cytoplasm. Its subcellular location is the nucleus. The enzyme catalyses S-ubiquitinyl-[E2 ubiquitin-conjugating enzyme]-L-cysteine + [acceptor protein]-L-lysine = [E2 ubiquitin-conjugating enzyme]-L-cysteine + N(6)-ubiquitinyl-[acceptor protein]-L-lysine.. It functions in the pathway protein modification; protein ubiquitination. In terms of biological role, capsid-specific restriction factor that prevents infection from non-host-adapted retroviruses. Blocks viral replication early in the life cycle, after viral entry but before reverse transcription. In addition to acting as a capsid-specific restriction factor, also acts as a pattern recognition receptor that activates innate immune signaling in response to the retroviral capsid lattice. Binding to the viral capsid triggers its E3 ubiquitin ligase activity, and in concert with the heterodimeric ubiquitin conjugating enzyme complex UBE2V1-UBE2N (also known as UBC13-UEV1A complex) generates 'Lys-63'-linked polyubiquitin chains, which in turn are catalysts in the autophosphorylation of the MAP3K7/TAK1 complex (includes TAK1, TAB2, and TAB3). Activation of the MAP3K7/TAK1 complex by autophosphorylation results in the induction and expression of NF-kappa-B and MAPK-responsive inflammatory genes, thereby leading to an innate immune response in the infected cell. Plays a role in regulating autophagy through activation of autophagy regulator BECN1 by causing its dissociation from its inhibitors BCL2 and TAB2. This Pongo abelii (Sumatran orangutan) protein is Tripartite motif-containing protein 5 (TRIM5).